The following is a 495-amino-acid chain: ATP-dependent RNA helicase dbp3 (495 aa).

A compositionally biased stretch (basic and acidic residues) spans Met-1–His-14. The interval Met-1 to Pro-49 is disordered. The span at Arg-15 to Lys-27 shows a compositional bias: basic residues. A Q motif motif is present at residues Ser-97 to Gln-105. A Helicase ATP-binding domain is found at Trp-109–Val-284. Ala-122–Thr-129 is an ATP binding site. A DEAD box motif is present at residues Asp-231–Asp-234. Positions Arg-315 to Gly-464 constitute a Helicase C-terminal domain.

Belongs to the DEAD box helicase family. DDX5/DBP2 subfamily.

It is found in the nucleus. The protein resides in the nucleolus. The catalysed reaction is ATP + H2O = ADP + phosphate + H(+). In terms of biological role, ATP-dependent RNA helicase required for 60S ribosomal subunit synthesis. Involved in efficient pre-rRNA processing, predominantly at site A3, which is necessary for the normal formation of 25S and 5.8S rRNAs. The polypeptide is ATP-dependent RNA helicase dbp3 (dbp3) (Aspergillus niger (strain ATCC MYA-4892 / CBS 513.88 / FGSC A1513)).